We begin with the raw amino-acid sequence, 605 residues long: Heparan-sulfate 6-O-sulfotransferase 2 (605 aa).

Topologically, residues 1–4 are cytoplasmic; that stretch reads MALP. The disordered stretch occupies residues 1 to 66; the sequence is MALPACAVRE…GVSHGFHTRP (66 aa). Residues 5-27 form a helical; Signal-anchor for type II membrane protein membrane-spanning segment; that stretch reads ACAVREFEPPRQPERGAPVRTTC. Residues 9–18 are compositionally biased toward basic and acidic residues; that stretch reads REFEPPRQPE. The Lumenal portion of the chain corresponds to 28–605; it reads PRRHSRVEAE…DYIGSVEKWR (578 aa). N-linked (GlcNAc...) asparagine glycosylation occurs at N209. 233–241 lines the 3'-phosphoadenylyl sulfate pocket; that stretch reads HIQKTGGTT. Residues 263-264, R280, W285, and H290 contribute to the substrate site; that span reads KK. Catalysis depends on H290, which acts as the Proton acceptor. 2 residues coordinate 3'-phosphoadenylyl sulfate: R325 and S333. Residues H337 and W344 each coordinate substrate. N404 is a glycosylation site (N-linked (GlcNAc...) asparagine). 3'-phosphoadenylyl sulfate is bound at residue 457-459; it reads TQY. N-linked (GlcNAc...) asparagine glycosylation occurs at N460. 463 to 464 contributes to the 3'-phosphoadenylyl sulfate binding site; it reads RA. The tract at residues 530-605 is disordered; the sequence is FQSQGQGQSQ…DYIGSVEKWR (76 aa). The span at 531-571 shows a compositional bias: low complexity; it reads QSQGQGQSQNPNQNQSQNPNPNANQNLTQNLMQNLTQSLSQ. 5 N-linked (GlcNAc...) asparagine glycosylation sites follow: N544, N556, N564, N589, and N592. Polar residues predominate over residues 579-597; it reads KQNSGKEQNDNTSNGTNDY.

It belongs to the sulfotransferase 6 family.

It is found in the membrane. It catalyses the reaction alpha-D-glucosaminyl-[heparan sulfate](n) + 3'-phosphoadenylyl sulfate = 6-sulfo-alpha-D-glucosaminyl-[heparan sulfate](n) + adenosine 3',5'-bisphosphate + H(+). 6-O-sulfation enzyme which catalyzes the transfer of sulfate from 3'-phosphoadenosine 5'-phosphosulfate (PAPS) to position 6 of the N-sulfoglucosamine residue (GlcNS) of heparan sulfate. This Homo sapiens (Human) protein is Heparan-sulfate 6-O-sulfotransferase 2.